Reading from the N-terminus, the 938-residue chain is Isoleucine--tRNA ligase (938 aa).

The 'HIGH' region motif lies at 58-68; sequence PYANGSIHIGH. An L-isoleucyl-5'-AMP-binding site is contributed by Glu561. The 'KMSKS' region motif lies at 602 to 606; the sequence is KMSKS. Lys605 is an ATP binding site. Residues Cys901, Cys904, Cys921, and Cys924 each coordinate Zn(2+).

Belongs to the class-I aminoacyl-tRNA synthetase family. IleS type 1 subfamily. Monomer. Zn(2+) is required as a cofactor.

Its subcellular location is the cytoplasm. It carries out the reaction tRNA(Ile) + L-isoleucine + ATP = L-isoleucyl-tRNA(Ile) + AMP + diphosphate. In terms of biological role, catalyzes the attachment of isoleucine to tRNA(Ile). As IleRS can inadvertently accommodate and process structurally similar amino acids such as valine, to avoid such errors it has two additional distinct tRNA(Ile)-dependent editing activities. One activity is designated as 'pretransfer' editing and involves the hydrolysis of activated Val-AMP. The other activity is designated 'posttransfer' editing and involves deacylation of mischarged Val-tRNA(Ile). The polypeptide is Isoleucine--tRNA ligase (Erwinia tasmaniensis (strain DSM 17950 / CFBP 7177 / CIP 109463 / NCPPB 4357 / Et1/99)).